A 436-amino-acid polypeptide reads, in one-letter code: Glutamate-1-semialdehyde 2,1-aminomutase 2 (436 aa).

Lys-271 carries the N6-(pyridoxal phosphate)lysine modification.

The protein belongs to the class-III pyridoxal-phosphate-dependent aminotransferase family. HemL subfamily. As to quaternary structure, homodimer. Pyridoxal 5'-phosphate is required as a cofactor.

The protein localises to the cytoplasm. The enzyme catalyses (S)-4-amino-5-oxopentanoate = 5-aminolevulinate. The protein operates within porphyrin-containing compound metabolism; protoporphyrin-IX biosynthesis; 5-aminolevulinate from L-glutamyl-tRNA(Glu): step 2/2. The protein is Glutamate-1-semialdehyde 2,1-aminomutase 2 of Exiguobacterium sibiricum (strain DSM 17290 / CCUG 55495 / CIP 109462 / JCM 13490 / 255-15).